Consider the following 326-residue polypeptide: N-acetyl-gamma-glutamyl-phosphate reductase (326 aa).

The active site involves Cys155.

It belongs to the NAGSA dehydrogenase family. Type 1 subfamily.

It is found in the cytoplasm. The enzyme catalyses N-acetyl-L-glutamate 5-semialdehyde + phosphate + NADP(+) = N-acetyl-L-glutamyl 5-phosphate + NADPH + H(+). It participates in amino-acid biosynthesis; L-arginine biosynthesis; N(2)-acetyl-L-ornithine from L-glutamate: step 3/4. In terms of biological role, catalyzes the NADPH-dependent reduction of N-acetyl-5-glutamyl phosphate to yield N-acetyl-L-glutamate 5-semialdehyde. This is N-acetyl-gamma-glutamyl-phosphate reductase from Shewanella baltica (strain OS185).